The primary structure comprises 417 residues: Serpin H1 (417 aa).

Residues Met1–Ala17 form the signal peptide. Residue Lys93 is modified to N6-succinyllysine. N-linked (GlcNAc...) asparagine glycans are attached at residues Asn119 and Asn124. At Ser140 the chain carries Phosphoserine. Lys206 carries the N6-acetyllysine modification. N6-succinyllysine is present on Lys295. Lys318 carries the N6-acetyllysine modification. Asn394 carries N-linked (GlcNAc...) asparagine glycosylation. The short motif at Arg414–Leu417 is the Prevents secretion from ER element.

Belongs to the serpin family.

It is found in the endoplasmic reticulum lumen. Functionally, binds specifically to collagen. Could be involved as a chaperone in the biosynthetic pathway of collagen. The sequence is that of Serpin H1 (Serpinh1) from Mus musculus (Mouse).